The primary structure comprises 292 residues: Probable ABC transporter phosphonate/phosphite binding protein PhnD2 (292 aa).

Residues Met-1–Ala-20 form the signal peptide. The N-palmitoyl cysteine moiety is linked to residue Cys-21. Residue Cys-21 is the site of S-diacylglycerol cysteine attachment.

This sequence belongs to the phosphate/phosphite/phosphonate binding protein family. As to quaternary structure, the complex may be composed of two ATP-binding proteins (PhnC2), two transmembrane proteins (PhnE2) and a solute-binding protein (PhnD2).

It localises to the cell membrane. Functionally, probably part of the ABC transporter complex PhnC2D2E2. Binds strongly to methylphosphonate (MPn), ethylphosphonate (EPn) and inorganic phosphite. The sequence is that of Probable ABC transporter phosphonate/phosphite binding protein PhnD2 from Prochlorococcus marinus (strain MIT 9301).